The following is a 20-amino-acid chain: L-amino-acid oxidase L2 (20 aa).

This sequence belongs to the flavin monoamine oxidase family. FIG1 subfamily. Monomer. This is in contrast with most of its orthologs, that are non-covalently linked homodimers. It depends on FAD as a cofactor. Post-translationally, N-glycosylated. In terms of tissue distribution, expressed by the venom gland.

The protein resides in the secreted. It carries out the reaction an L-alpha-amino acid + O2 + H2O = a 2-oxocarboxylate + H2O2 + NH4(+). The catalysed reaction is L-leucine + O2 + H2O = 4-methyl-2-oxopentanoate + H2O2 + NH4(+). The enzyme catalyses L-phenylalanine + O2 + H2O = 3-phenylpyruvate + H2O2 + NH4(+). It catalyses the reaction L-tryptophan + O2 + H2O = indole-3-pyruvate + H2O2 + NH4(+). It carries out the reaction L-methionine + O2 + H2O = 4-methylsulfanyl-2-oxobutanoate + H2O2 + NH4(+). The catalysed reaction is L-isoleucine + O2 + H2O = (S)-3-methyl-2-oxopentanoate + H2O2 + NH4(+). The enzyme catalyses L-tyrosine + O2 + H2O = 3-(4-hydroxyphenyl)pyruvate + H2O2 + NH4(+). In terms of biological role, catalyzes an oxidative deamination of predominantly hydrophobic and aromatic L-amino acids, thus producing hydrogen peroxide that may contribute to the diverse toxic effects of this enzyme. Is active on L-Ile, L-Leu, L-Met, L-Phe, L-Trp, and L-Tyr. Exhibits diverse biological activities, such as hemorrhage, hemolysis, edema, apoptosis of vascular endothelial cells or tumor cell lines, antibacterial and antiparasitic activities, as well as regulation of platelet aggregation. Its effect on platelets is controversial, since it either induces aggregation or inhibits agonist-induced aggregation. These different effects are probably due to different experimental conditions. This chain is L-amino-acid oxidase L2, found in Daboia russelii (Russel's viper).